A 175-amino-acid chain; its full sequence is MSKQDEVIVVGKFGASYGIRGWLKVVSFTDQPESIFDYKPWLIQVKGEWVEFSVESWKRHKGLVCKLKGLDVREEAQTYTNLEIAVKADALPELSEDEFYWRELFGMEVVTTKGYALGVVDDIFETGSNDVLVVKANLKDAFGKKERLIPFIDEQVIKLIDREAQRIEVDWDPGF.

A PRC barrel domain is found at 96–175 (EDEFYWRELF…RIEVDWDPGF (80 aa)).

Belongs to the RimM family. Binds ribosomal protein uS19.

The protein localises to the cytoplasm. Its function is as follows. An accessory protein needed during the final step in the assembly of 30S ribosomal subunit, possibly for assembly of the head region. Essential for efficient processing of 16S rRNA. May be needed both before and after RbfA during the maturation of 16S rRNA. It has affinity for free ribosomal 30S subunits but not for 70S ribosomes. This chain is Ribosome maturation factor RimM, found in Aliivibrio fischeri (strain ATCC 700601 / ES114) (Vibrio fischeri).